Reading from the N-terminus, the 411-residue chain is Putative ion-transport protein YfeO (411 aa).

11 helical membrane-spanning segments follow: residues 9 to 29, 54 to 74, 99 to 119, 149 to 169, 186 to 206, 223 to 243, 258 to 278, 296 to 316, 322 to 342, 343 to 363, and 386 to 406; these read MLLL…VLIA, DSPF…GLII, ALPG…SLGP, ILAS…AALI, LFAP…FFHP, IASG…AVWC, VLIL…GGPL, LGAG…VIAA, GGRI…LHAH, VEAV…VLVV, and LLCI…LLAA.

This sequence belongs to the chloride channel (TC 2.A.49) family.

Its subcellular location is the cell membrane. In Salmonella choleraesuis (strain SC-B67), this protein is Putative ion-transport protein YfeO.